Reading from the N-terminus, the 273-residue chain is 4-hydroxy-tetrahydrodipicolinate reductase (273 aa).

Residues 12-17 (GAGGRM) and glutamate 38 contribute to the NAD(+) site. Arginine 39 is an NADP(+) binding site. Residues 102–104 (GTT) and 126–129 (AANF) contribute to the NAD(+) site. Histidine 159 functions as the Proton donor/acceptor in the catalytic mechanism. Histidine 160 serves as a coordination point for (S)-2,3,4,5-tetrahydrodipicolinate. Lysine 163 (proton donor) is an active-site residue. Residue 169-170 (GT) coordinates (S)-2,3,4,5-tetrahydrodipicolinate.

The protein belongs to the DapB family. In terms of assembly, homotetramer.

The protein localises to the cytoplasm. It catalyses the reaction (S)-2,3,4,5-tetrahydrodipicolinate + NAD(+) + H2O = (2S,4S)-4-hydroxy-2,3,4,5-tetrahydrodipicolinate + NADH + H(+). The enzyme catalyses (S)-2,3,4,5-tetrahydrodipicolinate + NADP(+) + H2O = (2S,4S)-4-hydroxy-2,3,4,5-tetrahydrodipicolinate + NADPH + H(+). It functions in the pathway amino-acid biosynthesis; L-lysine biosynthesis via DAP pathway; (S)-tetrahydrodipicolinate from L-aspartate: step 4/4. Its function is as follows. Catalyzes the conversion of 4-hydroxy-tetrahydrodipicolinate (HTPA) to tetrahydrodipicolinate. The protein is 4-hydroxy-tetrahydrodipicolinate reductase of Shigella flexneri.